A 344-amino-acid chain; its full sequence is Phosphoribosylformylglycinamidine cyclo-ligase (344 aa).

Belongs to the AIR synthase family.

The protein resides in the cytoplasm. It catalyses the reaction 2-formamido-N(1)-(5-O-phospho-beta-D-ribosyl)acetamidine + ATP = 5-amino-1-(5-phospho-beta-D-ribosyl)imidazole + ADP + phosphate + H(+). Its pathway is purine metabolism; IMP biosynthesis via de novo pathway; 5-amino-1-(5-phospho-D-ribosyl)imidazole from N(2)-formyl-N(1)-(5-phospho-D-ribosyl)glycinamide: step 2/2. This is Phosphoribosylformylglycinamidine cyclo-ligase from Glaesserella parasuis serovar 5 (strain SH0165) (Haemophilus parasuis).